A 139-amino-acid polypeptide reads, in one-letter code: MAMTYHLDVVSAEQQMFSGLVEKIQVTGSEGELGIFPGHAPLLTAIKPGMIRIVKQFGHEEFIYLSGGILEVQPGSVTVLADTAIRGQDLDEARALEAKRKAEEHIKSSHGDVDYAQASAELAKAIAKLRVIELTKKAM.

The protein belongs to the ATPase epsilon chain family. In terms of assembly, F-type ATPases have 2 components, CF(1) - the catalytic core - and CF(0) - the membrane proton channel. CF(1) has five subunits: alpha(3), beta(3), gamma(1), delta(1), epsilon(1). CF(0) has three main subunits: a, b and c.

The protein localises to the cell inner membrane. In terms of biological role, produces ATP from ADP in the presence of a proton gradient across the membrane. The chain is ATP synthase epsilon chain from Enterobacter sp. (strain 638).